Reading from the N-terminus, the 127-residue chain is MARVKRAVNAHKKRRVVLERASGYRGQRSRLYRKAKEQLLHSFTYNFRDRKARKGDFRKLWIQRINAAVRAEGITYNRFIQGLHLAGIELDRRALAELAVSDPEAFKAIVEQAKAALPADVNAPKEA.

This sequence belongs to the bacterial ribosomal protein bL20 family.

Its function is as follows. Binds directly to 23S ribosomal RNA and is necessary for the in vitro assembly process of the 50S ribosomal subunit. It is not involved in the protein synthesizing functions of that subunit. This Bifidobacterium adolescentis (strain ATCC 15703 / DSM 20083 / NCTC 11814 / E194a) protein is Large ribosomal subunit protein bL20.